Reading from the N-terminus, the 107-residue chain is Nucleoid-associated protein Lferr_1592 (107 aa).

The protein belongs to the YbaB/EbfC family. Homodimer.

It is found in the cytoplasm. The protein resides in the nucleoid. Functionally, binds to DNA and alters its conformation. May be involved in regulation of gene expression, nucleoid organization and DNA protection. The polypeptide is Nucleoid-associated protein Lferr_1592 (Acidithiobacillus ferrooxidans (strain ATCC 53993 / BNL-5-31) (Leptospirillum ferrooxidans (ATCC 53993))).